The primary structure comprises 366 residues: tRNA/tmRNA (uracil-C(5))-methyltransferase (366 aa).

Positions 190, 218, 223, 239, and 299 each coordinate S-adenosyl-L-methionine. Cys324 serves as the catalytic Nucleophile. Residue Glu358 is the Proton acceptor of the active site.

It belongs to the class I-like SAM-binding methyltransferase superfamily. RNA M5U methyltransferase family. TrmA subfamily.

It catalyses the reaction uridine(54) in tRNA + S-adenosyl-L-methionine = 5-methyluridine(54) in tRNA + S-adenosyl-L-homocysteine + H(+). The enzyme catalyses uridine(341) in tmRNA + S-adenosyl-L-methionine = 5-methyluridine(341) in tmRNA + S-adenosyl-L-homocysteine + H(+). Functionally, dual-specificity methyltransferase that catalyzes the formation of 5-methyluridine at position 54 (m5U54) in all tRNAs, and that of position 341 (m5U341) in tmRNA (transfer-mRNA). This Salmonella agona (strain SL483) protein is tRNA/tmRNA (uracil-C(5))-methyltransferase.